The following is a 416-amino-acid chain: Dihydroorotase (416 aa).

Positions 53 and 55 each coordinate Zn(2+). Residues 55 to 57 (HLR) and N87 each bind substrate. Positions 145, 172, 225, and 298 each coordinate Zn(2+). The active site involves D298. H302 is a binding site for substrate.

It belongs to the metallo-dependent hydrolases superfamily. DHOase family. Class I DHOase subfamily. Zn(2+) serves as cofactor.

It catalyses the reaction (S)-dihydroorotate + H2O = N-carbamoyl-L-aspartate + H(+). The protein operates within pyrimidine metabolism; UMP biosynthesis via de novo pathway; (S)-dihydroorotate from bicarbonate: step 3/3. Its function is as follows. Catalyzes the reversible cyclization of carbamoyl aspartate to dihydroorotate. This is Dihydroorotase from Deinococcus radiodurans (strain ATCC 13939 / DSM 20539 / JCM 16871 / CCUG 27074 / LMG 4051 / NBRC 15346 / NCIMB 9279 / VKM B-1422 / R1).